Reading from the N-terminus, the 1170-residue chain is Thrombospondin-2 (1170 aa).

Positions 1 to 18 are cleaved as a signal peptide; that stretch reads MLWPLLLLALWAWPSAQA. One can recognise a Laminin G-like domain in the interval 19 to 215; the sequence is GDQDEDTAFD…LQNVYLVFEN (197 aa). The segment at 19-232 is heparin-binding; the sequence is GDQDEDTAFD…KKGCQQSQGA (214 aa). 3 N-linked (GlcNAc...) asparagine glycosylation sites follow: asparagine 151, asparagine 316, and asparagine 330. Positions 318 to 375 constitute a VWFC domain; sequence SACWQDGRFFAENETWVVDSCTKCTCKKFKTVCHQISCPPATCADPWFVEGECCPSCV. TSP type-1 domains are found at residues 379–429, 435–490, and 492–547; these read EEGW…GRCD, DGGW…PPCP, and DGRW…KSCP. Disulfide bonds link cysteine 391/cysteine 423, cysteine 395/cysteine 428, cysteine 406/cysteine 413, cysteine 447/cysteine 484, cysteine 451/cysteine 489, cysteine 462/cysteine 474, cysteine 504/cysteine 541, cysteine 508/cysteine 546, cysteine 519/cysteine 531, cysteine 551/cysteine 562, cysteine 556/cysteine 572, cysteine 575/cysteine 586, cysteine 592/cysteine 608, cysteine 599/cysteine 617, cysteine 620/cysteine 644, cysteine 650/cysteine 663, cysteine 657/cysteine 676, cysteine 678/cysteine 689, cysteine 705/cysteine 713, cysteine 718/cysteine 738, cysteine 754/cysteine 774, cysteine 777/cysteine 797, cysteine 813/cysteine 833, cysteine 836/cysteine 856, cysteine 874/cysteine 894, and cysteine 910/cysteine 930. Asparagine 455 carries N-linked (GlcNAc...) asparagine glycosylation. The EGF-like 1 domain occupies 547–587; it reads PIDGCLSNPCFPGAECSSFPDGSWSCGSCPGGFLGNGTHCE. N-linked (GlcNAc...) asparagine glycosylation occurs at asparagine 582. Positions 646–690 constitute an EGF-like 2 domain; it reads PENPCKDKTHSCHRHAECIYLGHFSDPMYKCECQTGYAGDGLICG. TSP type-3 repeat units lie at residues 691 to 726, 727 to 762, 763 to 785, 786 to 821, 822 to 844, 845 to 882, 883 to 918, and 919 to 954; these read EDSDLDGWPNKNLVCATNATYHCVKDNCPLLPNSGQ, EDFDKDGIGDACDDDDDNDGVSDEKDNCQLLFNPRQ, FDYDKDEVGDRCDNCPYVHNPAQ, IDTDNNGEGDACSVDIDGDDVFNERDNCPYVYNTDQ, RDTDGDGVGDHCDNCPLVHNPDQ, TDVDNDLVGDQCDNNEDIDEDGHQNNQDNCPHIPNANQ, ADHDRDGQGDACDSDDDNDGIPDDRDNCRLVANPDQ, and EDSDGDRRGDACKDDFDNDSIPDIDDVCPENNAISE. Asparagine 708 carries an N-linked (GlcNAc...) asparagine glycan. The segment at 731-750 is disordered; the sequence is KDGIGDACDDDDDNDGVSDE. Residues 737–747 are compositionally biased toward acidic residues; the sequence is ACDDDDDNDGV. Positions 841–944 are disordered; it reads NPDQTDVDND…DNDSIPDIDD (104 aa). 2 stretches are compositionally biased toward acidic residues: residues 845-864 and 894-903; these read TDVDNDLVGDQCDNNEDIDE and CDSDDDNDGI. Residues 923-933 show a composition bias toward basic and acidic residues; that stretch reads GDRRGDACKDD. The Cell attachment site signature appears at 926 to 928; that stretch reads RGD. A compositionally biased stretch (acidic residues) spans 934-944; sequence FDNDSIPDIDD. N-linked (GlcNAc...) asparagine glycosylation is found at asparagine 936 and asparagine 1067. Cysteine 946 and cysteine 1167 are oxidised to a cystine. The region spanning 958–1170 is the TSP C-terminal domain; it reads RNFQMVHLDP…SDLKYECRDV (213 aa).

The protein belongs to the thrombospondin family. In terms of assembly, homotrimer; disulfide-linked. Can bind to fibrinogen, fibronectin, laminin and type V collagen. Interacts (via the TSP type I repeats) with CD36; the interaction conveys an antiangiogenic effect. Interacts (via the TSP type I repeats) with HRG; the interaction blocks the antiangiogenic effect of THBS2 with CD36.

Adhesive glycoprotein that mediates cell-to-cell and cell-to-matrix interactions. Ligand for CD36 mediating antiangiogenic properties. The sequence is that of Thrombospondin-2 (THBS2) from Bos taurus (Bovine).